The sequence spans 253 residues: ATP synthase subunit a (253 aa).

Transmembrane regions (helical) follow at residues 27 to 47 (ISFTNASGFMLLGVVLVIGFF), 87 to 107 (FFPFVFTLFFFILFANLIGMV), 117 to 137 (IIVTGALAMTVILMVIVVGLI), 146 to 166 (LFAPSGAPLPIYIILTPIEII), 196 to 216 (FTVMLIGAGAIYIPVAALAFA), and 224 to 244 (LEFLVAGLQAYVFAILTCVYL).

Belongs to the ATPase A chain family. F-type ATPases have 2 components, CF(1) - the catalytic core - and CF(0) - the membrane proton channel. CF(1) has five subunits: alpha(3), beta(3), gamma(1), delta(1), epsilon(1). CF(0) has three main subunits: a(1), b(2) and c(9-12). The alpha and beta chains form an alternating ring which encloses part of the gamma chain. CF(1) is attached to CF(0) by a central stalk formed by the gamma and epsilon chains, while a peripheral stalk is formed by the delta and b chains.

The protein resides in the cell inner membrane. In terms of biological role, key component of the proton channel; it plays a direct role in the translocation of protons across the membrane. The protein is ATP synthase subunit a of Hyphomonas neptunium (strain ATCC 15444).